The chain runs to 475 residues: MDRISSLSNDIISNIVSFLSAKDAAVASVLSKRWQNIYTIVPNLEFDNTLENQGSLTDFLNGLLALPASTRIKNVSIKRRGRDGPNRDADLNRFLCNVLKRGVLKLKLDIWVTLDGRYSLPVEVFTCKTLVELELGSILQIDLVPENALLPALKTLIIDAVQFSDQSGCAFQKLLSSCPVLVELRMLNVQWEHWQWSRRVSSPTLEKLTMNHRYHFGNTYYDMEGITFDTPSLTSLKYYDLPPKSYPTVNLDSLVEATISLTLPLHHAWTGKHARRGDTVPSVTNLIKGLRNVETLNLSSTDTVAAFYFSNEAIPVFENLHRLSIATEREFCWRTLPYLLKKSPNLESLVIGGPLHYNYQLGDGYESEEIYSEDDDEEESESDDDEPICECLSDYSFLESCLVKTVEISEYSGTKIELKHMKHFLEKLSCLELVKVFSHERDEEEHVQLRTNLLNLPRSSKCKTQFEFIPPRSSV.

Residues 1-49 enclose the F-box domain; it reads MDRISSLSNDIISNIVSFLSAKDAAVASVLSKRWQNIYTIVPNLEFDNT.

This Arabidopsis thaliana (Mouse-ear cress) protein is Putative F-box protein At3g58960.